A 1484-amino-acid polypeptide reads, in one-letter code: Glutamate receptor ionotropic, NMDA 2B (1484 aa).

The first 26 residues, 1 to 26 (MKPRAECCSPKFWLVLAVLAVSGSRA), serve as a signal peptide directing secretion. Residues 27–555 (RSQKSPPSIG…SPSAFLEPFS (529 aa)) are Extracellular-facing. Asn-74 carries N-linked (GlcNAc...) asparagine glycosylation. Residues Cys-86 and Cys-321 are joined by a disulfide bond. His-127 and Glu-284 together coordinate Zn(2+). N-linked (GlcNAc...) asparagine glycosylation is found at Asn-341, Asn-348, Asn-444, and Asn-491. Disulfide bonds link Cys-429/Cys-456 and Cys-436/Cys-457. Residues Thr-514 and Arg-519 each coordinate L-glutamate. N-linked (GlcNAc...) asparagine glycosylation occurs at Asn-542. Residues 556–576 (ADVWVMMFVMLLIVSAVAVFV) form a helical membrane-spanning segment. Residues 577-601 (FEYFSPVGYNRCLADGREPGGPSFT) lie on the Cytoplasmic side of the membrane. An intramembrane region (discontinuously helical) is located at residues 602–613 (IGKAIWLLWGLV). The segment at 604–623 (KAIWLLWGLVFNNSVPVQNP) is pore-forming. Topologically, residues 614 to 627 (FNNSVPVQNPKGTT) are cytoplasmic. The helical transmembrane segment at 628–647 (SKIMVSVWAFFAVIFLASYT) threads the bilayer. Over 648-819 (ANLAAFMIQE…SSQLDIDNMA (172 aa)) the chain is Extracellular. An N-linked (GlcNAc...) asparagine glycan is attached at Asn-688. Residues 690 to 691 (ST) and Asp-732 contribute to the L-glutamate site. The chain crosses the membrane as a helical span at residues 820-835 (GVFYMLGAAMALSLIT). Residues 836-1484 (FICEHLFYWQ…EKLSSIESDV (649 aa)) are Cytoplasmic-facing. Residues Ser-882, Ser-886, Ser-917, and Ser-920 each carry the phosphoserine modification. Phosphotyrosine is present on residues Tyr-962 and Tyr-1039. Ser-1058, Ser-1061, and Ser-1064 each carry phosphoserine. The segment at 1074–1097 (EGNAAKRRKQQYKDSLKKRPASAK) is disordered. Tyr-1109 and Tyr-1133 each carry phosphotyrosine. Phosphoserine is present on Ser-1143. Tyr-1155 bears the Phosphotyrosine mark. The tract at residues 1161–1194 (DFKRDSVSGGGPCTNRSHIKHGTGDKHGVVSGVP) is disordered. Phosphoserine occurs at positions 1255 and 1259. The tract at residues 1271–1301 (AVTSNASTTKYPQSPTNSKAQKKNRNKLRRQ) is disordered. Residues 1272–1289 (VTSNASTTKYPQSPTNSK) show a composition bias toward polar residues. Residues 1290-1301 (AQKKNRNKLRRQ) show a composition bias toward basic residues. Positions 1292–1304 (KKNRNKLRRQHSY) are interaction with DAPK1. Phosphoserine; by DAPK1 is present on Ser-1303. At Tyr-1474 the chain carries Phosphotyrosine. The short motif at 1482–1484 (SDV) is the PDZ-binding element.

It belongs to the glutamate-gated ion channel (TC 1.A.10.1) family. NR2B/GRIN2B subfamily. In terms of assembly, heterotetramer. Forms heterotetrameric channels composed of two GluN1/zeta subunits (GRIN1), and two identical GluN2/epsilon subunits (GRIN2A, GRIN2B, GRIN2C or GRIN2D) or GluN3 subunits (GRIN3A or GRIN3B) (in vitro). Can also form heterotetrameric channels that contain at least two GluN1 subunits and at least two different GluN2 subunits (or a combination of one GluN2 and one GluN3 subunits) (in vitro). In vivo, the subunit composition may depend on the expression levels of the different subunits. Found in a complex with GRIN1 and GRIN3B. Found in a complex with GRIN1, GRIN3A and PPP2CB. Interacts with PDZ domains of PATJ, DLG3 and DLG4. Interacts with HIP1 and NETO1. Interacts with MAGI3. Interacts with DAPK1. Found in a complex with GRIN1 and PRR7. Interacts with PRR7. Interacts with CAMK2A. Interacts with ARC; preventing ARC oligomerization. Interacts with TMEM25. Interacts (via the extreme C-terminus) with FRMPD2 (via the second PDZ domain); the interaction is direct and is likely to promote NMDAR-mediated neural signal transmission. Interacts with FAM81A; the interaction facilitates condensate formation via liquid-liquid phase separation. Post-translationally, phosphorylated on tyrosine residues. Phosphorylation at Ser-1303 by DAPK1 enhances synaptic NMDA receptor channel activity. As to expression, primarily found in the fronto-parieto-temporal cortex and hippocampus pyramidal cells, lower expression in the basal ganglia.

It is found in the cell membrane. The protein resides in the postsynaptic cell membrane. Its subcellular location is the cell projection. It localises to the dendrite. The protein localises to the late endosome. It is found in the lysosome. The protein resides in the cytoplasm. Its subcellular location is the cytoskeleton. It catalyses the reaction Ca(2+)(in) = Ca(2+)(out). The catalysed reaction is Na(+)(in) = Na(+)(out). The enzyme catalyses K(+)(in) = K(+)(out). Component of N-methyl-D-aspartate (NMDA) receptors (NMDARs) that function as heterotetrameric, ligand-gated cation channels with high calcium permeability and voltage-dependent block by Mg(2+). Participates in synaptic plasticity for learning and memory formation by contributing to the long-term depression (LTD) of hippocampus membrane currents. Channel activation requires binding of the neurotransmitter L-glutamate to the GluN2 subunit, glycine or D-serine binding to the GluN1 subunit, plus membrane depolarization to eliminate channel inhibition by Mg(2+). NMDARs mediate simultaneously the potasium efflux and the influx of calcium and sodium. Each GluN2 subunit confers differential attributes to channel properties, including activation, deactivation and desensitization kinetics, pH sensitivity, Ca2(+) permeability, and binding to allosteric modulators. In concert with DAPK1 at extrasynaptic sites, acts as a central mediator for stroke damage. Its phosphorylation at Ser-1303 by DAPK1 enhances synaptic NMDA receptor channel activity inducing injurious Ca2+ influx through them, resulting in an irreversible neuronal death. This is Glutamate receptor ionotropic, NMDA 2B from Homo sapiens (Human).